The chain runs to 159 residues: NADH-quinone oxidoreductase subunit I (159 aa).

4Fe-4S ferredoxin-type domains follow at residues 51–80 (RRYE…IEAD) and 90–119 (TRYD…EGPN). Positions 60, 63, 66, 70, 99, 102, 105, and 109 each coordinate [4Fe-4S] cluster.

It belongs to the complex I 23 kDa subunit family. NDH-1 is composed of 14 different subunits. Subunits NuoA, H, J, K, L, M, N constitute the membrane sector of the complex. The cofactor is [4Fe-4S] cluster.

The protein localises to the cell inner membrane. The enzyme catalyses a quinone + NADH + 5 H(+)(in) = a quinol + NAD(+) + 4 H(+)(out). In terms of biological role, NDH-1 shuttles electrons from NADH, via FMN and iron-sulfur (Fe-S) centers, to quinones in the respiratory chain. The immediate electron acceptor for the enzyme in this species is believed to be ubiquinone. Couples the redox reaction to proton translocation (for every two electrons transferred, four hydrogen ions are translocated across the cytoplasmic membrane), and thus conserves the redox energy in a proton gradient. This is NADH-quinone oxidoreductase subunit I from Rickettsia peacockii (strain Rustic).